Reading from the N-terminus, the 216-residue chain is uncharacterized protein (216 aa).

4Fe-4S ferredoxin-type domains lie at 160–189 and 188–216; these read DDKPINDEFCTGCGTCVAKCPANALTIDEK and EKPKVNISKCIKCGTCFFNCIRVKEALLP. [4Fe-4S] cluster-binding residues include Cys169, Cys172, Cys175, Cys179, Cys197, Cys200, Cys203, and Cys207.

It belongs to the FrhG family.

This is an uncharacterized protein from Methanocaldococcus jannaschii (strain ATCC 43067 / DSM 2661 / JAL-1 / JCM 10045 / NBRC 100440) (Methanococcus jannaschii).